A 66-amino-acid chain; its full sequence is KEGYIVDYHTGCKYTCAKLGDNDYCVRECRLRYYQSAHGYCYAFACWCTHLYEQAVVWPLPNKRCK.

Positions 1 to 66 (KEGYIVDYHT…VWPLPNKRCK (66 aa)) constitute an LCN-type CS-alpha/beta domain. 4 disulfide bridges follow: Cys-12-Cys-65, Cys-16-Cys-41, Cys-25-Cys-46, and Cys-29-Cys-48. Lys-66 is subject to Lysine amide.

This sequence belongs to the long (4 C-C) scorpion toxin superfamily. Sodium channel inhibitor family. Beta subfamily. As to expression, expressed by the venom gland.

It localises to the secreted. In terms of biological role, beta toxins bind voltage-independently at site-4 of sodium channels and shift the voltage of activation toward more negative potentials thereby affecting sodium channel activation and promoting spontaneous and repetitive firing. Is active on the human voltage-gated sodium channels Nav1.4/SCN4A, Nav1.5/SCN5A and Nav1.6/SCN8A when tested at 200 nM. In vivo, is toxic to mice when intraperitoneally injected. The polypeptide is Beta-toxin Cbo4 (Centruroides bonito (Scorpion)).